The chain runs to 178 residues: Putative RING-H2 finger protein ATL19 (178 aa).

The helical transmembrane segment at 11-31 (LISVLGLAVFIGLCILLVVLI) threads the bilayer. Residues 130–172 (CAICLSGYVVNEECRVFPVCRHIYHALCIDAWLKNHLTCPTCR) form an RING-type; atypical zinc finger.

Belongs to the RING-type zinc finger family. ATL subfamily.

It localises to the membrane. It catalyses the reaction S-ubiquitinyl-[E2 ubiquitin-conjugating enzyme]-L-cysteine + [acceptor protein]-L-lysine = [E2 ubiquitin-conjugating enzyme]-L-cysteine + N(6)-ubiquitinyl-[acceptor protein]-L-lysine.. It functions in the pathway protein modification; protein ubiquitination. This Arabidopsis thaliana (Mouse-ear cress) protein is Putative RING-H2 finger protein ATL19 (ATL19).